Consider the following 330-residue polypeptide: Lysophospholipase D GDPD3 (330 aa).

A topological domain (cytoplasmic) is located at residue M1. Residues 2 to 22 form a helical membrane-spanning segment; that stretch reads IPLLYFVLPTLGSYVMLSIFF. The Extracellular segment spans residues 23–200; that stretch reads LRRPHLLHTP…ANPEMPMAFT (178 aa). The GP-PDE domain maps to 39 to 308; that stretch reads IRLAAHRGGS…DYPTALRHYL (270 aa). A divalent metal cation contacts are provided by E71, D73, and H86. Residues 201–221 traverse the membrane as a helical segment; sequence IWRSFWILLLYYLGLLPFVSI. At 222 to 330 the chain is on the cytoplasmic side; the sequence is PEKFFFCFLP…EALSCLSLKK (109 aa). The disordered stretch occupies residues 311 to 330; it reads QEEETQPPQPEALSCLSLKK.

This sequence belongs to the glycerophosphoryl diester phosphodiesterase family. As to expression, highly expressed in stomach and kidney. In stomach detected in the glandular epithelium. Predominantly expressed in the stomach (at protein level).

Its subcellular location is the membrane. The protein localises to the cytoplasm. It localises to the perinuclear region. The protein resides in the endoplasmic reticulum membrane. It catalyses the reaction 1-hexadecanoyl-sn-glycero-3-phosphocholine + H2O = 1-hexadecanoyl-sn-glycero-3-phosphate + choline + H(+). It carries out the reaction 1-O-hexadecyl-sn-glycero-3-phosphocholine + H2O = 1-O-hexadecyl-sn-glycero-3-phosphate + choline + H(+). The enzyme catalyses 1-O-(1Z-octadecenyl)-sn-glycero-3-phospho-N-hexadecanoyl-ethanolamine + H2O = 1-O-(1Z-octadecenyl)-sn-glycero-3-phosphate + N-hexadecanoylethanolamine + H(+). The catalysed reaction is N-(5Z,8Z,11Z,14Z-eicosatetraenoyl)-1-(9Z-octadecenoyl)-sn-glycero-3-phosphoethanolamine + H2O = N-(5Z,8Z,11Z,14Z-eicosatetraenoyl)-ethanolamine + 1-(9Z-octadecenoyl)-sn-glycero-3-phosphate + H(+). It catalyses the reaction N,1-di-(9Z-octadecenoyl)-sn-glycero-3-phosphoethanolamine + H2O = N-(9Z-octadecenoyl) ethanolamine + 1-(9Z-octadecenoyl)-sn-glycero-3-phosphate + H(+). It carries out the reaction N-hexadecanoyl-1-(9Z-octadecenoyl)-sn-glycero-3-phosphoethanolamine + H2O = N-hexadecanoylethanolamine + 1-(9Z-octadecenoyl)-sn-glycero-3-phosphate + H(+). The enzyme catalyses 1-hexadecanoyl-sn-glycero-3-phosphocholine + H2O = sn-glycerol 3-phosphocholine + hexadecanoate + H(+). Its activity is regulated as follows. Lysophospholipase D activity is stimulated by calcium. Loss of lysophospholipase D activity in presence of EDTA. In terms of biological role, hydrolyzes lysoglycerophospholipids to produce lysophosphatidic acid (LPA) and the corresponding amines. Shows a preference for 1-O-alkyl-sn-glycero-3-phosphocholine (lyso-PAF), lysophosphatidylcholine (lyso-PC) and N-acylethanolamine lysophospholipids. Does not display glycerophosphodiester phosphodiesterase activity, since it cannot hydrolyze either glycerophosphoinositol or glycerophosphocholine. The protein is Lysophospholipase D GDPD3 of Mus musculus (Mouse).